A 99-amino-acid polypeptide reads, in one-letter code: MTSGLERLSNLLSKKDSVFVSDLLREAKVNELDETLSTTRLNHLIDKGYERITLQLDLGGESPGYLEKDKHYREADAALLNVIYPTNLSKINTRRKEQV.

This chain is Putative protein YgeP (ygeP), found in Escherichia coli (strain K12).